A 195-amino-acid chain; its full sequence is L-rhamnose-binding lectin CSL3 (195 aa).

2 SUEL-type lectin domains span residues 1–95 and 105–195; these read AISI…YSCV and ICEG…YTCD.

L-rhamnose binding lectin. Has hemagglutinating activity towards rabbit erythrocytes, human type A erythrocytes, human type B erythrocytes, human type O erythrocytes and sheep erythrocytes. Hemagglutinating activity is inhibited by smooth-type lipopolysaccharide (LPS) from S.flexneri 1A, A.salmonicida and E.coli K12, but not by rough-type LPS from S.flexneri, E.coli K12 and E.coli EH100. Agglutinates E.coli K12 and B.subtilis. In Oncorhynchus keta (Chum salmon), this protein is L-rhamnose-binding lectin CSL3.